The sequence spans 107 residues: Flagellar hook-basal body complex protein FliE (107 aa).

It belongs to the FliE family.

Its subcellular location is the bacterial flagellum basal body. The protein is Flagellar hook-basal body complex protein FliE of Mesorhizobium japonicum (strain LMG 29417 / CECT 9101 / MAFF 303099) (Mesorhizobium loti (strain MAFF 303099)).